Reading from the N-terminus, the 336-residue chain is Ribosomal RNA large subunit methyltransferase F (336 aa).

Belongs to the methyltransferase superfamily. METTL16/RlmF family.

It localises to the cytoplasm. It carries out the reaction adenosine(1618) in 23S rRNA + S-adenosyl-L-methionine = N(6)-methyladenosine(1618) in 23S rRNA + S-adenosyl-L-homocysteine + H(+). Functionally, specifically methylates the adenine in position 1618 of 23S rRNA. This chain is Ribosomal RNA large subunit methyltransferase F, found in Yersinia pestis (strain Pestoides F).